Here is a 901-residue protein sequence, read N- to C-terminus: HTH-type transcriptional regulator MalT (901 aa).

39–46 (SPAGYGKT) is an ATP binding site. The HTH luxR-type domain occupies 829-894 (ELIRTSPLTQ…AAVQHAQKLL (66 aa)). The segment at residues 853 to 872 (NEQIAGELEVAATTIKTHIR) is a DNA-binding region (H-T-H motif).

This sequence belongs to the MalT family. As to quaternary structure, monomer in solution. Oligomerizes to an active state in the presence of the positive effectors ATP and maltotriose.

Activated by ATP and maltotriose, which are both required for DNA binding. Functionally, positively regulates the transcription of the maltose regulon whose gene products are responsible for uptake and catabolism of malto-oligosaccharides. Specifically binds to the promoter region of its target genes, recognizing a short DNA motif called the MalT box. This Escherichia coli O139:H28 (strain E24377A / ETEC) protein is HTH-type transcriptional regulator MalT.